The primary structure comprises 211 residues: Small ribosomal subunit protein uS5 (211 aa).

Positions 51–114 (LKHEVLDVSL…ANAKLNITPV (64 aa)) constitute an S5 DRBM domain.

Belongs to the universal ribosomal protein uS5 family. As to quaternary structure, part of the 30S ribosomal subunit. Contacts protein S4.

Its function is as follows. With S4 and S12 plays an important role in translational accuracy. The polypeptide is Small ribosomal subunit protein uS5 (Ignicoccus hospitalis (strain KIN4/I / DSM 18386 / JCM 14125)).